Here is a 421-residue protein sequence, read N- to C-terminus: D-amino acid dehydrogenase (421 aa).

Position 3-17 (3-17 (VLVLGGGVVGVTSAY)) interacts with FAD.

It belongs to the DadA oxidoreductase family. The cofactor is FAD.

The enzyme catalyses a D-alpha-amino acid + A + H2O = a 2-oxocarboxylate + AH2 + NH4(+). Its pathway is amino-acid degradation; D-alanine degradation; NH(3) and pyruvate from D-alanine: step 1/1. Its function is as follows. Oxidative deamination of D-amino acids. This chain is D-amino acid dehydrogenase, found in Methylobacterium sp. (strain 4-46).